The sequence spans 1198 residues: DNA polymerase II large subunit (1198 aa).

2 disordered regions span residues 281 to 332 (YKTG…PQKK) and 534 to 553 (HWAE…AAES). A compositionally biased stretch (acidic residues) spans 286 to 319 (DTDEADADSDDGTDEDAADDSDIDDSSAGDEEAD).

Belongs to the archaeal DNA polymerase II family. In terms of assembly, heterodimer of a large subunit and a small subunit.

The enzyme catalyses DNA(n) + a 2'-deoxyribonucleoside 5'-triphosphate = DNA(n+1) + diphosphate. It catalyses the reaction Exonucleolytic cleavage in the 3'- to 5'-direction to yield nucleoside 5'-phosphates.. Possesses two activities: a DNA synthesis (polymerase) and an exonucleolytic activity that degrades single-stranded DNA in the 3'- to 5'-direction. Has a template-primer preference which is characteristic of a replicative DNA polymerase. The chain is DNA polymerase II large subunit from Natronomonas pharaonis (strain ATCC 35678 / DSM 2160 / CIP 103997 / JCM 8858 / NBRC 14720 / NCIMB 2260 / Gabara) (Halobacterium pharaonis).